Consider the following 74-residue polypeptide: Protein SlyX homolog (74 aa).

The disordered stretch occupies residues 54-74; it reads QDRNPDAQEPYSLRDEIPPHY.

The protein belongs to the SlyX family.

This Neisseria gonorrhoeae (strain ATCC 700825 / FA 1090) protein is Protein SlyX homolog.